A 617-amino-acid chain; its full sequence is Zinc metalloproteinase nas-36 (617 aa).

A signal peptide spans 1 to 22 (MRLCHSIILFNSLISISICSKA). Residues 23–126 (DDPALLVASE…SKDKTKRLRR (104 aa)) constitute a propeptide that is removed on maturation. One can recognise a Peptidase M12A domain in the interval 127–322 (SFVSDKTATW…VATINTAYCK (196 aa)). Intrachain disulfides connect Cys-169–Cys-321, Cys-192–Cys-211, Cys-325–Cys-346, Cys-348–Cys-357, Cys-368–Cys-397, Cys-425–Cys-445, Cys-519–Cys-550, Cys-523–Cys-555, and Cys-535–Cys-540. N-linked (GlcNAc...) asparagine glycosylation occurs at Asn-174. His-219 lines the Zn(2+) pocket. Glu-220 is a catalytic residue. Residues His-223 and His-229 each contribute to the Zn(2+) site. The region spanning 317 to 358 (NTAYCKDECKSEKTKCENGGYMRPSKCSECLCPDGLGGEKCE) is the EGF-like domain. In terms of domain architecture, CUB spans 368 to 482 (CGGIIKLTEE…IGFKIQAKST (115 aa)). The 50-residue stretch at 507–556 (PNVWADWGEWSMCSRTCGGCGIRSRVRSCRSKKCEGRRQEFGTCNLKACP) folds into the TSP type-1 domain.

Zn(2+) is required as a cofactor. In terms of tissue distribution, expressed in hypodermal cells. Also detected in the hypodermal seam cells in L4 larvae and young adults. In old adult hermaphrodites, it localizes to the vulva (at protein level).

Its subcellular location is the secreted. Metalloprotease. Involved in molting, a process during larval stages in which a new cuticle is formed and the old cuticle is shed. The chain is Zinc metalloproteinase nas-36 (nas-36) from Caenorhabditis elegans.